The following is a 219-amino-acid chain: Dual specificity phosphatase 29 (219 aa).

A Tyrosine-protein phosphatase domain is found at 53 to 201 (HVNEVWPKLY…LRELDRQLVQ (149 aa)). 145–152 (HCVMGRSR) contacts substrate. The active-site Phosphocysteine intermediate is Cys146.

The protein belongs to the protein-tyrosine phosphatase family. Non-receptor class dual specificity subfamily. In terms of assembly, homodimer. Interacts with PRKAA2.

The protein resides in the cytoplasm. The protein localises to the nucleus. The enzyme catalyses O-phospho-L-tyrosyl-[protein] + H2O = L-tyrosyl-[protein] + phosphate. It catalyses the reaction O-phospho-L-seryl-[protein] + H2O = L-seryl-[protein] + phosphate. The catalysed reaction is O-phospho-L-threonyl-[protein] + H2O = L-threonyl-[protein] + phosphate. Dual specificity phosphatase able to dephosphorylate phosphotyrosine, phosphoserine and phosphothreonine residues within the same substrate, with a preference for phosphotyrosine as a substrate. Involved in the modulation of intracellular signaling cascades. May regulate glucose metabolism by activating, AMPK, an energy sensor protein kinase. Affects MAP kinase signaling though modulation of the ERK1/2 cascade in skeletal muscle promoting muscle cell differentiation, development and atrophy. The protein is Dual specificity phosphatase 29 (DUSP29) of Bos taurus (Bovine).